A 163-amino-acid polypeptide reads, in one-letter code: MEVVKFEPDTEGIERRRGIKPFGNIGKIRVIKSTTAPRFNLYTTEVGIDCKEEQKQYIPYRPSLEEPAVSNAYVPPTIKRPETCSVKLSNLPLDMTRDRLHSIIKSHTNIFFMSPNLVMNRETGAFRGFAFVTLESRDDAVKLIKDLKGVAIDSLGLSAEIAR.

Residues 84-163 (CSVKLSNLPL…SLGLSAEIAR (80 aa)) form the RRM domain.

The sequence is that of RRM-domain-containing protein ECU01_0840 from Encephalitozoon cuniculi (strain GB-M1) (Microsporidian parasite).